Consider the following 505-residue polypeptide: Trans-cinnamate 4-monooxygenase (505 aa).

Residues 3 to 23 form a helical membrane-spanning segment; it reads LLLLEKTLLALFLAAITAITI. Residues 213–218 and A306 each bind (E)-cinnamate; that span reads RSRLAQ. C447 lines the heme pocket.

The protein belongs to the cytochrome P450 family. Heme is required as a cofactor.

The protein resides in the membrane. It catalyses the reaction (E)-cinnamate + reduced [NADPH--hemoprotein reductase] + O2 = (E)-4-coumarate + oxidized [NADPH--hemoprotein reductase] + H2O + H(+). Its pathway is phenylpropanoid metabolism; trans-4-coumarate biosynthesis; trans-4-coumarate from trans-cinnamate: step 1/1. Catalyzes the first oxidative step of the phenylpropanoid pathway in higher plants by transforming trans-cinnamate into p-coumarate. The compounds formed by this pathway are essential components for lignification, pollination, and defense against ultraviolet light, predators and pathogens. This Pisum sativum (Garden pea) protein is Trans-cinnamate 4-monooxygenase (CYP73A9).